The chain runs to 331 residues: Serine/threonine-protein phosphatase PP1 isozyme 7 (331 aa).

The residue at position 1 (Met-1) is an N-acetylmethionine. Mn(2+) is bound by residues Asp-60, His-62, Asp-88, and Asn-120. Catalysis depends on His-121, which acts as the Proton donor. Mn(2+) is bound by residues His-169 and His-244.

The protein belongs to the PPP phosphatase family. PP-1 subfamily. The cofactor is Mn(2+). Expressed in roots, rosettes and flowers.

The protein localises to the nucleus. The protein resides in the cytoplasm. It carries out the reaction O-phospho-L-seryl-[protein] + H2O = L-seryl-[protein] + phosphate. It catalyses the reaction O-phospho-L-threonyl-[protein] + H2O = L-threonyl-[protein] + phosphate. Phosphatase activity is strongly reduced by the protein phosphatase inhibitor 2 (I-2). Its function is as follows. Serine/threonine-protein phosphatase that possesses phosphatase activity toward para-nitrophenyl phosphate (pNPP) in vitro. This chain is Serine/threonine-protein phosphatase PP1 isozyme 7, found in Arabidopsis thaliana (Mouse-ear cress).